Consider the following 133-residue polypeptide: Large ribosomal subunit protein bL19 (133 aa).

It belongs to the bacterial ribosomal protein bL19 family.

Functionally, this protein is located at the 30S-50S ribosomal subunit interface and may play a role in the structure and function of the aminoacyl-tRNA binding site. This Stenotrophomonas maltophilia (strain R551-3) protein is Large ribosomal subunit protein bL19.